A 329-amino-acid polypeptide reads, in one-letter code: Homeobox protein ceh-40 (329 aa).

The 184-residue stretch at glutamate 3–aspartate 186 folds into the PBC domain. The interval aspartate 10 to leucine 90 is PBC-A. Residues isoleucine 93 to aspartate 186 are PBC-B. The segment at residues alanine 187–methionine 249 is a DNA-binding region (homeobox; TALE-type). The disordered stretch occupies residues threonine 248–tyrosine 275. The segment covering alanine 250 to proline 266 has biased composition (basic and acidic residues).

Belongs to the TALE/PBX homeobox family. As to expression, expressed in head dopaminergic neurons.

The protein localises to the nucleus. In terms of biological role, plays a role in regulating gene expression in dopaminergic neurons, acting redundantly with homeobox protein ceh-20 in head neurons. May activate dopamine pathway genes in concert with ETS domain-containing protein ast-1, and homeobox proteins ceh-43 and ceh-20. The chain is Homeobox protein ceh-40 (ceh-40) from Caenorhabditis elegans.